Reading from the N-terminus, the 131-residue chain is Insulin-like 3 (131 aa).

A signal peptide spans 1–26 (MDPHPLTWALVLLGPALALSRAPAPA). 3 disulfides stabilise this stretch: C34-C116, C46-C129, and C115-C120. A propeptide spans 58–103 (AVAGGDRELLQWLEGQHLFHGLMASGDPMLVLAPQPPPQASGHHHH) (c peptide like).

The protein belongs to the insulin family. As to quaternary structure, heterodimer of a B chain and an A chain linked by two disulfide bonds. In terms of tissue distribution, expressed exclusively in prenatal and postnatal Leydig cells.

The protein resides in the secreted. Seems to play a role in testicular function. May be a trophic hormone with a role in testicular descent in fetal life. Is a ligand for LGR8 receptor. The protein is Insulin-like 3 (INSL3) of Sus scrofa (Pig).